The sequence spans 137 residues: Protein cornichon homolog 3 (137 aa).

Transmembrane regions (helical) follow at residues 8 to 28 (IISF…LISL), 54 to 74 (ILQG…MALL), and 113 to 133 (LAYI…STLD).

It belongs to the cornichon family.

It is found in the membrane. This Arabidopsis thaliana (Mouse-ear cress) protein is Protein cornichon homolog 3.